The chain runs to 348 residues: MSDRLTLLRPDDWHIHLRDGAVLPHTVGDVARTFARAIIMPNLVPPVRTANEAGAYRERILAARPAGSRFEPLMVLYLTDNISPEDIRAAKASGFVYAAKLYPAGATTNSDSGVTSIDNIFPAIEAMAEVGMPLLVHGEVTRSEIDVFDREKRFIDEHMRRVVERFPTLKVVFEHITTSDAAQFVTEAPANVGATITAQHLLYNRNHMLVGGIRPHFYCLPILKRNTHQVALLDAATSGNPKFFLGTDSAPHARHAKEAACGCAGCYTAYAAIEMYAEAFEQRNALDKLEGFASLHGPAFYGLPANTDTITLVREEWTAPESLPFGEQTVVPLRAGEKLRWRLLEKNA.

2 residues coordinate Zn(2+): His-14 and His-16. Residues 16 to 18 (HLR) and Asn-42 contribute to the substrate site. Residues Lys-100, His-137, and His-175 each contribute to the Zn(2+) site. Lys-100 carries the N6-carboxylysine modification. Residue His-137 coordinates substrate. Residue Leu-220 coordinates substrate. Asp-248 is a binding site for Zn(2+). Asp-248 is an active-site residue. 2 residues coordinate substrate: His-252 and Ala-264.

It belongs to the metallo-dependent hydrolases superfamily. DHOase family. Class II DHOase subfamily. As to quaternary structure, homodimer. The cofactor is Zn(2+).

The enzyme catalyses (S)-dihydroorotate + H2O = N-carbamoyl-L-aspartate + H(+). It functions in the pathway pyrimidine metabolism; UMP biosynthesis via de novo pathway; (S)-dihydroorotate from bicarbonate: step 3/3. In terms of biological role, catalyzes the reversible cyclization of carbamoyl aspartate to dihydroorotate. The protein is Dihydroorotase of Pseudomonas putida (strain ATCC 700007 / DSM 6899 / JCM 31910 / BCRC 17059 / LMG 24140 / F1).